A 730-amino-acid polypeptide reads, in one-letter code: Protein folded gastrulation (730 aa).

The N-terminal stretch at M1–N21 is a signal peptide. N-linked (GlcNAc...) asparagine glycosylation is found at N51 and N193. The span at T197–T211 shows a compositional bias: low complexity. The segment at T197–A222 is disordered. N-linked (GlcNAc...) asparagine glycosylation is found at N252 and N289. The segment covering E361–T385 has biased composition (acidic residues). A disordered region spans residues E361–I424. The span at T386–S415 shows a compositional bias: low complexity. The N-linked (GlcNAc...) asparagine glycan is linked to N459. 2 disordered regions span residues E474–K526 and K545–T583. The segment covering S478–P491 has biased composition (low complexity). Positions D504–I513 are enriched in polar residues. Low complexity predominate over residues T567 to T583. 2 N-linked (GlcNAc...) asparagine glycosylation sites follow: N590 and N639. The segment covering S663 to T676 has biased composition (low complexity). Residues S663–P683 are disordered. N678 is a glycosylation site (N-linked (GlcNAc...) asparagine).

May be highly O-glycosylated in its Ser/Thr-rich C-terminal part. Expressed in the invagination primordia in a pattern that precisely precedes the pattern of constrictions.

It is found in the secreted. The protein resides in the extracellular space. The protein localises to the extracellular matrix. Coordinates cell shape changes during formation of the ventral furrow and invagination of the posterior midgut primordium, by inducing apical constriction of cells in spatially and temporally defined manners. Could function as a secreted signal to initiate apical constriction by acting as a ligand for an unidentified G protein-coupled receptor, which in turn activates the G protein alpha subunit encoded by concertina, in neighboring cells. Such an intracellular pathway would ultimately induce contraction of the apical actin-myosin network. In the ventral furrow, fog appears to ensure that all the cells initiate constriction within several minutes of each other. In the posterior midgut invagination, fog appears to direct the ordered progression of constriction initiations out from a central region and also to delimit the peripheral extent of this spreading. This chain is Protein folded gastrulation (fog), found in Drosophila melanogaster (Fruit fly).